The following is a 378-amino-acid chain: Sphingosine 1-phosphate receptor 3 (378 aa).

Residues 1 to 44 lie on the Extracellular side of the membrane; the sequence is MATTHAQGHQPVLGNDTLREHYDYVGKLAGRLRDPPEGGTLITT. Asn-15 carries N-linked (GlcNAc...) asparagine glycosylation. Residues 45–65 traverse the membrane as a helical segment; the sequence is ILFLVTCSFIVLENLMVLIAI. Residues 66–74 are Cytoplasmic-facing; sequence WKNNKFHNR. A helical transmembrane segment spans residues 75–95; that stretch reads MYFFIGNLALCDLLAGIAYKV. Over 96 to 115 the chain is Extracellular; the sequence is NILMSGRKTFSLSPTVWFLR. A helical transmembrane segment spans residues 116 to 136; it reads EGSMFVALGASTCSLLAIAIE. Over 137–154 the chain is Cytoplasmic; the sequence is RHLTMIKMRPYDANKKHR. A helical transmembrane segment spans residues 155–175; sequence VFLLIGMCWLIAFSLGALPIL. Topologically, residues 176 to 196 are extracellular; that stretch reads GWNCLENFPDCSTILPLYSKK. Residues 197–217 form a helical membrane-spanning segment; sequence YIAFLISIFTAILVTIVILYA. The Cytoplasmic segment spans residues 218–244; the sequence is RIYCLVKSSSRRVANHNSERSMALLRT. A helical membrane pass occupies residues 245–265; the sequence is VVIVVSVFIACWSPLFILFLI. Residues 266–281 lie on the Extracellular side of the membrane; the sequence is DVACRAKECSILFKSQ. Residues 282–302 traverse the membrane as a helical segment; the sequence is WFIMLAVLNSAMNPVIYTLAS. The Cytoplasmic segment spans residues 303–378; the sequence is KEMRRAFFRL…RSFQNGVLCK (76 aa). The segment at 323 to 354 is disordered; that stretch reads TQASPMQPALDPSRSKSSSSNNSSHSPKVKED. Position 326 is a phosphoserine (Ser-326). A compositionally biased stretch (low complexity) spans 337–348; that stretch reads SKSSSSNNSSHS.

This sequence belongs to the G-protein coupled receptor 1 family. Most abundant in heart, lung, kidney and spleen; low but detectable in brain, thymus, muscle and testis; and nearly undetectable in liver, stomach, and intestine. Expressed in embryonic lung from embryonic day 14-18. Also abundantly detected in embryonic nasal cartilage, sphenoid bone, vena cava, Meckel's cartilage/incisor teeth, genital tubercle and bladder.

It localises to the cell membrane. Functionally, receptor for the lysosphingolipid sphingosine 1-phosphate (S1P). S1P is a bioactive lysophospholipid that elicits diverse physiological effect on most types of cells and tissues. The sequence is that of Sphingosine 1-phosphate receptor 3 (S1pr3) from Mus musculus (Mouse).